Reading from the N-terminus, the 433-residue chain is Serine--tRNA ligase (433 aa).

235-237 (TSE) serves as a coordination point for L-serine. An ATP-binding site is contributed by 266–268 (RSE). Position 289 (E289) interacts with L-serine. 353–356 (EISS) contacts ATP. Position 388 (S388) interacts with L-serine.

It belongs to the class-II aminoacyl-tRNA synthetase family. Type-1 seryl-tRNA synthetase subfamily. As to quaternary structure, homodimer. The tRNA molecule binds across the dimer.

It localises to the cytoplasm. It carries out the reaction tRNA(Ser) + L-serine + ATP = L-seryl-tRNA(Ser) + AMP + diphosphate + H(+). The enzyme catalyses tRNA(Sec) + L-serine + ATP = L-seryl-tRNA(Sec) + AMP + diphosphate + H(+). The protein operates within aminoacyl-tRNA biosynthesis; selenocysteinyl-tRNA(Sec) biosynthesis; L-seryl-tRNA(Sec) from L-serine and tRNA(Sec): step 1/1. Functionally, catalyzes the attachment of serine to tRNA(Ser). Is also able to aminoacylate tRNA(Sec) with serine, to form the misacylated tRNA L-seryl-tRNA(Sec), which will be further converted into selenocysteinyl-tRNA(Sec). The polypeptide is Serine--tRNA ligase (Burkholderia vietnamiensis (strain G4 / LMG 22486) (Burkholderia cepacia (strain R1808))).